Reading from the N-terminus, the 142-residue chain is COA8 family protein CBG23705, mitochondrial (142 aa).

It belongs to the COA8 family.

It localises to the mitochondrion inner membrane. Functionally, may be required for cytochrome c complex (COX) assembly and function, COX being the terminal component of the mitochondrial respiratory chain. This chain is COA8 family protein CBG23705, mitochondrial, found in Caenorhabditis briggsae.